The sequence spans 388 residues: Probable tRNA sulfurtransferase (388 aa).

Residues 55–162 enclose the THUMP domain; sequence VTLDDKLKKI…PEGVLIFTDR (108 aa). Residues 180–181, 205–206, Arg264, Gly286, and Gln295 contribute to the ATP site; these read LL and TF.

This sequence belongs to the ThiI family.

It is found in the cytoplasm. The catalysed reaction is [ThiI sulfur-carrier protein]-S-sulfanyl-L-cysteine + a uridine in tRNA + 2 reduced [2Fe-2S]-[ferredoxin] + ATP + H(+) = [ThiI sulfur-carrier protein]-L-cysteine + a 4-thiouridine in tRNA + 2 oxidized [2Fe-2S]-[ferredoxin] + AMP + diphosphate. It carries out the reaction [ThiS sulfur-carrier protein]-C-terminal Gly-Gly-AMP + S-sulfanyl-L-cysteinyl-[cysteine desulfurase] + AH2 = [ThiS sulfur-carrier protein]-C-terminal-Gly-aminoethanethioate + L-cysteinyl-[cysteine desulfurase] + A + AMP + 2 H(+). The protein operates within cofactor biosynthesis; thiamine diphosphate biosynthesis. In terms of biological role, catalyzes the ATP-dependent transfer of a sulfur to tRNA to produce 4-thiouridine in position 8 of tRNAs, which functions as a near-UV photosensor. Also catalyzes the transfer of sulfur to the sulfur carrier protein ThiS, forming ThiS-thiocarboxylate. This is a step in the synthesis of thiazole, in the thiamine biosynthesis pathway. The sulfur is donated as persulfide by IscS. This is Probable tRNA sulfurtransferase from Thermotoga maritima (strain ATCC 43589 / DSM 3109 / JCM 10099 / NBRC 100826 / MSB8).